We begin with the raw amino-acid sequence, 134 residues long: Small ribosomal subunit protein uS9 (134 aa).

The span at 98 to 114 (SKQELKSHGFLTRDPRK) shows a compositional bias: basic and acidic residues. A disordered region spans residues 98–134 (SKQELKSHGFLTRDPRKKERKKYGHKKARKSFQFSKR). Residues 115–134 (KERKKYGHKKARKSFQFSKR) show a composition bias toward basic residues.

Belongs to the universal ribosomal protein uS9 family.

In Chlamydia caviae (strain ATCC VR-813 / DSM 19441 / 03DC25 / GPIC) (Chlamydophila caviae), this protein is Small ribosomal subunit protein uS9.